Reading from the N-terminus, the 296-residue chain is 4-diphosphocytidyl-2-C-methyl-D-erythritol kinase (296 aa).

Lysine 12 is an active-site residue. 94-104 provides a ligand contact to ATP; that stretch reads PAQAGMGGGSS. Residue aspartate 136 is part of the active site.

The protein belongs to the GHMP kinase family. IspE subfamily.

It catalyses the reaction 4-CDP-2-C-methyl-D-erythritol + ATP = 4-CDP-2-C-methyl-D-erythritol 2-phosphate + ADP + H(+). Its pathway is isoprenoid biosynthesis; isopentenyl diphosphate biosynthesis via DXP pathway; isopentenyl diphosphate from 1-deoxy-D-xylulose 5-phosphate: step 3/6. In terms of biological role, catalyzes the phosphorylation of the position 2 hydroxy group of 4-diphosphocytidyl-2C-methyl-D-erythritol. The sequence is that of 4-diphosphocytidyl-2-C-methyl-D-erythritol kinase from Variovorax paradoxus (strain S110).